A 505-amino-acid polypeptide reads, in one-letter code: Structural protein 27 (505 aa).

3 hydrophobic regions span residues 20–40, 423–443, and 470–490; these read VSLI…FSPV, MKGI…MSTI, and IGLG…LILV.

It is found in the virion. The polypeptide is Structural protein 27 (His1 virus (isolate Australia/Victoria) (His1V)).